The primary structure comprises 193 residues: MLHLLVGLGNPGKEYELTRHNVGFMIIDAIMHHFLFPDFKKKHNALISSGSIRSHKVILAKPYTFMNNSGTPISSIVKLYKIPLDNIIVFHDETDIDFCTIRIKKGGGNAGHNGLKSIDTLLGRDYWRIRFGIGHPSNGYDLSYHVLSQFNNLNAVNNTISNIIEHISLLFENDKSIFKNKVKDLIKYTDISS.

Y15 is a binding site for tRNA. The active-site Proton acceptor is H20. The tRNA site is built by F65, N67, and N113.

It belongs to the PTH family. As to quaternary structure, monomer.

Its subcellular location is the cytoplasm. It catalyses the reaction an N-acyl-L-alpha-aminoacyl-tRNA + H2O = an N-acyl-L-amino acid + a tRNA + H(+). Functionally, hydrolyzes ribosome-free peptidyl-tRNAs (with 1 or more amino acids incorporated), which drop off the ribosome during protein synthesis, or as a result of ribosome stalling. Catalyzes the release of premature peptidyl moieties from peptidyl-tRNA molecules trapped in stalled 50S ribosomal subunits, and thus maintains levels of free tRNAs and 50S ribosomes. The protein is Peptidyl-tRNA hydrolase of Ehrlichia ruminantium (strain Welgevonden).